Reading from the N-terminus, the 435-residue chain is Probable tRNA pseudouridine synthase D (435 aa).

Catalysis depends on Asp95, which acts as the Nucleophile. Positions 170 to 396 constitute a TRUD domain; it reads GVPNYFGTQR…SSGTRRAVLV (227 aa).

Belongs to the pseudouridine synthase TruD family.

The catalysed reaction is uridine(13) in tRNA = pseudouridine(13) in tRNA. In terms of biological role, could be responsible for synthesis of pseudouridine from uracil-13 in transfer RNAs. The sequence is that of Probable tRNA pseudouridine synthase D from Natronomonas pharaonis (strain ATCC 35678 / DSM 2160 / CIP 103997 / JCM 8858 / NBRC 14720 / NCIMB 2260 / Gabara) (Halobacterium pharaonis).